The following is a 305-amino-acid chain: Flagellin FlaB2 (305 aa).

Residues 1-18 (MGLQKIVKKYNKKMKRKG) constitute a propeptide, propeptide.

The protein belongs to the archaeal flagellin family. Post-translationally, glycosylated.

The protein resides in the archaeal flagellum. In terms of biological role, flagellin is the subunit protein which polymerizes to form the filaments of archaeal flagella. The protein is Flagellin FlaB2 of Saccharolobus shibatae (strain ATCC 51178 / DSM 5389 / JCM 8931 / NBRC 15437 / B12) (Sulfolobus shibatae).